Here is a 461-residue protein sequence, read N- to C-terminus: Gustatory and pheromone receptor 32a (461 aa).

At 1–100 the chain is on the cytoplasmic side; it reads MSPNTWVIEM…YSFFVRGVVH (100 aa). A helical transmembrane segment spans residues 101-121; the sequence is ALTIFNVYSLFTPISAQLFFS. The Extracellular segment spans residues 122 to 127; that stretch reads YRETDN. A helical transmembrane segment spans residues 128 to 148; that stretch reads VNQWIELLLCILTYTLTVFVC. The Cytoplasmic portion of the chain corresponds to 149 to 180; that stretch reads AHNTTSMLRIMNEILQLDEEVRRQFGANLSQN. A helical membrane pass occupies residues 181-201; sequence FGFLVKFLVGITACQAYIIVL. The Extracellular portion of the chain corresponds to 202–214; sequence KIYAVQGEITPTS. Residues 215–235 form a helical membrane-spanning segment; sequence YILLAFYGIQNGLTATYIVFA. The Cytoplasmic portion of the chain corresponds to 236-317; sequence SALLRIVYIR…YKGINDCCNL (82 aa). A helical transmembrane segment spans residues 318-338; sequence ILVSFLGYSFYTVTTNCYNLF. Over 339–348 the chain is Extracellular; sequence VQITGKGMVS. A helical transmembrane segment spans residues 349–369; the sequence is PNILQWCFAWLCLHVSLLALL. Residues 370 to 414 lie on the Cytoplasmic side of the membrane; sequence SRSCGLTTTEANATSQILARVYAKSKEYQNIIDKFLTKSIKQEVQ. A helical transmembrane segment spans residues 415–435; the sequence is FTAYGFFAIDNSTLFKIFSAV. The Extracellular segment spans residues 436-461; the sequence is TTYLVILIQFKQLEDSKVEDPVPEQT.

This sequence belongs to the insect chemoreceptor superfamily. Gustatory receptor (GR) family. Gr21a subfamily. Expressed in the adult labellar chemosensory neurons. Expressed in tarsal neurons for male-male courtship suppression. In larvae, is expressed in neurons of the terminal external chemosensory organ, and the dorsal and posterior external chemosensory organs.

Its subcellular location is the cell membrane. Gustatory receptor which mediates acceptance or avoidance behavior, depending on its substrates. Required for the response to N,N-Diethyl-meta-toluamide (DEET), the most widely used insect repellent worldwide. Functions as a pheromone receptor for a male inhibitory pheromone and promotes male-male aggression and suppresses male-male courtship. Also promotes preferentially virgin females courting over mated females. This Drosophila melanogaster (Fruit fly) protein is Gustatory and pheromone receptor 32a (Gr32a).